We begin with the raw amino-acid sequence, 389 residues long: Indole-3-acetate monooxygenase (389 aa).

This sequence belongs to the HpaH/HsaA monooxygenase family.

It carries out the reaction (indol-3-yl)acetate + NADH + O2 + H(+) = 2-hydroxy-(1H-indol-3-yl)acetate + NAD(+) + H2O. The catalysed reaction is indole + NADH + O2 + H(+) = indoxyl + NAD(+) + H2O. Involved in the degradation of the plant hormone indole-3-acetic acid (IAA). Catalyzes the first step of the pathway, the conversion of IAA to 2-hydroxy-IAA (2-OH-IAA). Can also convert indole to indoxyl, which spontaneously dimerizes in the presence of oxygen to form the blue pigment indigo. This chain is Indole-3-acetate monooxygenase, found in Acinetobacter baumannii (strain ATCC 19606 / DSM 30007 / JCM 6841 / CCUG 19606 / CIP 70.34 / NBRC 109757 / NCIMB 12457 / NCTC 12156 / 81).